A 592-amino-acid polypeptide reads, in one-letter code: Monocopper oxidase-like protein SKS2 (592 aa).

The first 23 residues, 1-23, serve as a signal peptide directing secretion; that stretch reads MAATDFFFAFVFSFALIFGFSFA. N61, N110, N172, N203, N259, N280, N295, N344, N364, N433, and N447 each carry an N-linked (GlcNAc...) asparagine glycan. H455 is a binding site for Cu cation. N-linked (GlcNAc...) asparagine glycans are attached at residues N476 and N536. S564 carries the GPI-anchor amidated serine lipid modification. The propeptide at 565 to 592 is removed in mature form; that stretch reads ATKSMTNGQLILIFSMMMVLLSSFSSFC.

Belongs to the multicopper oxidase family. Requires Cu cation as cofactor.

It is found in the cell membrane. The polypeptide is Monocopper oxidase-like protein SKS2 (SKS2) (Arabidopsis thaliana (Mouse-ear cress)).